Consider the following 155-residue polypeptide: MSENTIYSGLKQLGSHTDIPLTPEEAVLERVANPQEGTPYCVRFTAPEFSSLCPMTGQPDFAHLVIDYVPGKWLVESKSLKLFLFSFRNHGAFHEDCTVTIGKRLVDLLEPEWLRIGGYWYPRGGIPIDVFYQTGAAPLNVWIPEQGVANYRGRG.

Catalysis depends on cysteine 53, which acts as the Thioimide intermediate. Aspartate 60 functions as the Proton donor in the catalytic mechanism. Substrate contacts are provided by residues 75–77 and 94–95; these read VES and HE.

Belongs to the GTP cyclohydrolase I family. QueF type 1 subfamily.

It localises to the cytoplasm. The enzyme catalyses 7-aminomethyl-7-carbaguanine + 2 NADP(+) = 7-cyano-7-deazaguanine + 2 NADPH + 3 H(+). It participates in tRNA modification; tRNA-queuosine biosynthesis. In terms of biological role, catalyzes the NADPH-dependent reduction of 7-cyano-7-deazaguanine (preQ0) to 7-aminomethyl-7-deazaguanine (preQ1). The polypeptide is NADPH-dependent 7-cyano-7-deazaguanine reductase (Brucella abortus (strain S19)).